A 516-amino-acid polypeptide reads, in one-letter code: Keratin, type II cuticular Hb2 (516 aa).

The interval 1–118 is head; sequence MSCRNFQLSP…PTVQRVKRDE (118 aa). In terms of domain architecture, IF rod spans 118-429; it reads EKEQIKCLNN…RLLEGEEHRL (312 aa). The interval 119-153 is coil 1A; the sequence is KEQIKCLNNRFASFINKVRFLEQKNKLLETKWNFM. The linker 1 stretch occupies residues 154-163; that stretch reads QQQRSCQSNM. The interval 164-264 is coil 1B; it reads EPLFEGYICA…FEEEIGLLQS (101 aa). Residues 265-281 are linker 12; the sequence is QISETSVIVKMDNSREL. Residues 282–425 are coil 2; it reads DVDGIVAEIK…ATYRRLLEGE (144 aa). The tail stretch occupies residues 426 to 516; that stretch reads EHRLCEGIGP…VGVGSNSCSR (91 aa).

This sequence belongs to the intermediate filament family. Heterotetramer of two type I and two type II keratins.

The chain is Keratin, type II cuticular Hb2 (Krt82) from Mus musculus (Mouse).